The following is a 211-amino-acid chain: Ribonuclease P protein component 3 (211 aa).

This sequence belongs to the eukaryotic/archaeal RNase P protein component 3 family. Consists of a catalytic RNA component and at least 4-5 protein subunits.

It is found in the cytoplasm. The enzyme catalyses Endonucleolytic cleavage of RNA, removing 5'-extranucleotides from tRNA precursor.. Functionally, part of ribonuclease P, a protein complex that generates mature tRNA molecules by cleaving their 5'-ends. This chain is Ribonuclease P protein component 3, found in Aeropyrum pernix (strain ATCC 700893 / DSM 11879 / JCM 9820 / NBRC 100138 / K1).